Here is a 164-residue protein sequence, read N- to C-terminus: Large ribosomal subunit protein uL10 (164 aa).

The protein belongs to the universal ribosomal protein uL10 family. As to quaternary structure, part of the ribosomal stalk of the 50S ribosomal subunit. The N-terminus interacts with L11 and the large rRNA to form the base of the stalk. The C-terminus forms an elongated spine to which L12 dimers bind in a sequential fashion forming a multimeric L10(L12)X complex.

In terms of biological role, forms part of the ribosomal stalk, playing a central role in the interaction of the ribosome with GTP-bound translation factors. The polypeptide is Large ribosomal subunit protein uL10 (Photobacterium profundum (strain SS9)).